The following is a 308-amino-acid chain: 2-dehydro-3-deoxy-phosphogluconate/2-dehydro-3-deoxy-6-phosphogalactonate aldolase (308 aa).

Substrate is bound by residues 57–58 (TT), 144–146 (YNY), and 169–171 (KDT). The active-site Schiff-base intermediate with substrate is the Lys169.

The protein belongs to the DapA family. KDPG aldolase subfamily. In terms of assembly, homotetramer; dimer of dimers.

The catalysed reaction is 2-dehydro-3-deoxy-6-phospho-D-gluconate = D-glyceraldehyde 3-phosphate + pyruvate. The enzyme catalyses 2-dehydro-3-deoxy-6-phospho-D-galactonate = D-glyceraldehyde 3-phosphate + pyruvate. It participates in carbohydrate acid metabolism; 2-dehydro-3-deoxy-D-gluconate degradation; D-glyceraldehyde 3-phosphate and pyruvate from 2-dehydro-3-deoxy-D-gluconate: step 2/2. In terms of biological role, involved in the degradation of glucose and galactose via the Entner-Doudoroff pathway. Catalyzes the reversible cleavage of 2-keto-3-deoxy-6-phosphogluconate (KDPG) and 2-keto-3-deoxygluconate (KDG) forming pyruvate and glyceraldehyde 3-phosphate or glyceraldehyde, respectively. It is also able to catalyze the reversible cleavage of 2-keto-3-deoxy-6-phosphogalactonate (KDPGal) and 2-keto-3-deoxygalactonate (KDGal). The protein is 2-dehydro-3-deoxy-phosphogluconate/2-dehydro-3-deoxy-6-phosphogalactonate aldolase (eda) of Saccharolobus solfataricus (strain ATCC 35092 / DSM 1617 / JCM 11322 / P2) (Sulfolobus solfataricus).